Consider the following 453-residue polypeptide: Adenosylmethionine-8-amino-7-oxononanoate aminotransferase (453 aa).

Pyridoxal 5'-phosphate is bound at residue 118-119 (GS). Position 151 (Tyr151) interacts with substrate. Asp258 provides a ligand contact to pyridoxal 5'-phosphate. Substrate is bound by residues Lys287, Gly322, and Arg417. Residue Lys287 is modified to N6-(pyridoxal phosphate)lysine.

Belongs to the class-III pyridoxal-phosphate-dependent aminotransferase family. BioA subfamily. In terms of assembly, homodimer. Pyridoxal 5'-phosphate is required as a cofactor.

Its subcellular location is the cytoplasm. It catalyses the reaction (8S)-8-amino-7-oxononanoate + S-adenosyl-L-methionine = S-adenosyl-4-methylsulfanyl-2-oxobutanoate + (7R,8S)-7,8-diammoniononanoate. Its pathway is cofactor biosynthesis; biotin biosynthesis; 7,8-diaminononanoate from 8-amino-7-oxononanoate (SAM route): step 1/1. Catalyzes the transfer of the alpha-amino group from S-adenosyl-L-methionine (SAM) to 7-keto-8-aminopelargonic acid (KAPA) to form 7,8-diaminopelargonic acid (DAPA). It is the only aminotransferase known to utilize SAM as an amino donor. In Geobacter sulfurreducens (strain ATCC 51573 / DSM 12127 / PCA), this protein is Adenosylmethionine-8-amino-7-oxononanoate aminotransferase.